Here is a 234-residue protein sequence, read N- to C-terminus: Iron-sulfur cluster co-chaperone protein HscB (234 aa).

Cysteine 40, cysteine 43, cysteine 57, and cysteine 60 together coordinate a divalent metal cation. The J domain maps to 71 to 143; that stretch reads DYFSLMNCNR…LTRGLYLLKL (73 aa).

Belongs to the HscB family. In terms of assembly, interacts with ISCU and HSPA9 to form an iron-sulfur transfer complex. Interacts with SDHAF1 (via the first LYR motif); the interaction recruits the iron-sulfur transfer complex composed of HSC20, HSPA9 and ISCU and mediates the incorporation of iron-sulfur clusters into SDHB which also interacts with HSC20. Interacts with the cytoplasmic form of ISCU and with CIA complex member CIAO1 (via LYR motif). As to quaternary structure, homodimer. Interacts with ISCU (cytoplasmic form); this interaction stabilizes the (Fe-S) clusters on ISCU. Interacts with the CIA complex member CIAO1 (via LYR motif).

It is found in the cytoplasm. The protein resides in the mitochondrion. It functions in the pathway cofactor biosynthesis; iron-sulfur cluster biosynthesis. Its function is as follows. Acts as a co-chaperone in iron-sulfur cluster assembly in mitochondria. Required for incorporation of iron-sulfur clusters into SDHB, the iron-sulfur protein subunit of succinate dehydrogenase that is involved in complex II of the mitochondrial electron transport chain. Recruited to SDHB by interaction with SDHAF1 which first binds SDHB and then recruits the iron-sulfur transfer complex formed by HSC20, HSPA9 and ISCU through direct binding to HSC20. Plays an essential role in hematopoiesis. In terms of biological role, acts as a co-chaperone in iron-sulfur cluster assembly in the cytoplasm. Also mediates complex formation between components of the cytosolic iron-sulfur biogenesis pathway and the CIA targeting complex composed of CIAO1, DIPK1B/FAM69B and MMS19 by binding directly to the scaffold protein ISCU and to CIAO1. This facilitates iron-sulfur cluster insertion into a number of cytoplasmic and nuclear proteins including POLD1, ELP3, DPYD and PPAT. This is Iron-sulfur cluster co-chaperone protein HscB from Mus musculus (Mouse).